Here is a 257-residue protein sequence, read N- to C-terminus: Ribonuclease HII (257 aa).

The RNase H type-2 domain maps to 71–257 (ELIAGIDEVG…EPIKSMVNFK (187 aa)). Residues D77, E78, and D169 each contribute to the a divalent metal cation site.

The protein belongs to the RNase HII family. The cofactor is Mn(2+). Mg(2+) serves as cofactor.

The protein resides in the cytoplasm. It catalyses the reaction Endonucleolytic cleavage to 5'-phosphomonoester.. In terms of biological role, endonuclease that specifically degrades the RNA of RNA-DNA hybrids. The protein is Ribonuclease HII (rnhB) of Lactococcus lactis subsp. cremoris (strain MG1363).